Here is a 285-residue protein sequence, read N- to C-terminus: 2,3,4,5-tetrahydropyridine-2,6-dicarboxylate N-succinyltransferase (285 aa).

This sequence belongs to the transferase hexapeptide repeat family.

It localises to the cytoplasm. The enzyme catalyses (S)-2,3,4,5-tetrahydrodipicolinate + succinyl-CoA + H2O = (S)-2-succinylamino-6-oxoheptanedioate + CoA. It functions in the pathway amino-acid biosynthesis; L-lysine biosynthesis via DAP pathway; LL-2,6-diaminopimelate from (S)-tetrahydrodipicolinate (succinylase route): step 1/3. This Beijerinckia indica subsp. indica (strain ATCC 9039 / DSM 1715 / NCIMB 8712) protein is 2,3,4,5-tetrahydropyridine-2,6-dicarboxylate N-succinyltransferase.